Here is a 181-residue protein sequence, read N- to C-terminus: TATA-box-binding protein (181 aa).

2 tandem repeats follow at residues 7–83 (IVNV…IKEL) and 98–173 (VQNM…SKTL).

Belongs to the TBP family.

Its function is as follows. General factor that plays a role in the activation of archaeal genes transcribed by RNA polymerase. Binds specifically to the TATA box promoter element which lies close to the position of transcription initiation. This is TATA-box-binding protein from Methanococcus maripaludis (strain C6 / ATCC BAA-1332).